The primary structure comprises 55 residues: Large ribosomal subunit protein bL33 (55 aa).

This sequence belongs to the bacterial ribosomal protein bL33 family.

The protein is Large ribosomal subunit protein bL33 of Acidiphilium cryptum (strain JF-5).